We begin with the raw amino-acid sequence, 209 residues long: FK506-binding protein 2B (209 aa).

The first 19 residues, 1-19, serve as a signal peptide directing secretion; sequence MRFSLLALLGTIVATSVSA. Residues 47–136 form the PPIase FKBP-type domain; it reads GDELSMHYTG…VFEVELLEIK (90 aa). Residues 157–177 form a helical membrane-spanning segment; the sequence is FTSPSFLVSTGIIVALFLIVF. Residues 178-207 adopt a coiled-coil conformation; the sequence is KMAKKQDIAEANEKAAAATAEASTEKKEEK. Residues 190 to 209 are disordered; that stretch reads EKAAAATAEASTEKKEEKKE. Residues 200–209 are compositionally biased toward basic and acidic residues; it reads STEKKEEKKE.

This sequence belongs to the FKBP-type PPIase family. FKBP2 subfamily.

It is found in the membrane. The enzyme catalyses [protein]-peptidylproline (omega=180) = [protein]-peptidylproline (omega=0). With respect to regulation, inhibited by both FK506 and rapamycin. Its function is as follows. PPIases accelerate the folding of proteins. It catalyzes the cis-trans isomerization of proline imidic peptide bonds in oligopeptides. The sequence is that of FK506-binding protein 2B (FKBP3) from Rhizopus delemar (strain RA 99-880 / ATCC MYA-4621 / FGSC 9543 / NRRL 43880) (Mucormycosis agent).